The primary structure comprises 248 residues: Pyridoxine 5'-phosphate synthase (248 aa).

Asparagine 7 serves as a coordination point for 3-amino-2-oxopropyl phosphate. Residue 9 to 10 (DH) participates in 1-deoxy-D-xylulose 5-phosphate binding. Arginine 18 is a 3-amino-2-oxopropyl phosphate binding site. The Proton acceptor role is filled by histidine 43. 2 residues coordinate 1-deoxy-D-xylulose 5-phosphate: arginine 45 and histidine 50. Glutamate 70 serves as the catalytic Proton acceptor. Threonine 100 contacts 1-deoxy-D-xylulose 5-phosphate. Catalysis depends on histidine 191, which acts as the Proton donor. Residues glycine 192 and 213 to 214 (GH) contribute to the 3-amino-2-oxopropyl phosphate site.

It belongs to the PNP synthase family. In terms of assembly, homooctamer; tetramer of dimers.

Its subcellular location is the cytoplasm. It carries out the reaction 3-amino-2-oxopropyl phosphate + 1-deoxy-D-xylulose 5-phosphate = pyridoxine 5'-phosphate + phosphate + 2 H2O + H(+). The protein operates within cofactor biosynthesis; pyridoxine 5'-phosphate biosynthesis; pyridoxine 5'-phosphate from D-erythrose 4-phosphate: step 5/5. Catalyzes the complicated ring closure reaction between the two acyclic compounds 1-deoxy-D-xylulose-5-phosphate (DXP) and 3-amino-2-oxopropyl phosphate (1-amino-acetone-3-phosphate or AAP) to form pyridoxine 5'-phosphate (PNP) and inorganic phosphate. The protein is Pyridoxine 5'-phosphate synthase of Bordetella bronchiseptica (strain ATCC BAA-588 / NCTC 13252 / RB50) (Alcaligenes bronchisepticus).